The chain runs to 258 residues: Thrombin-like enzyme CPI-enzyme 2 (258 aa).

Positions 1–18 (MVLIRVLANLLILQLSYA) are cleaved as a signal peptide. The propeptide occupies 19 to 24 (QKSSEL). Residues 25 to 249 (VIGGDECNIN…YTDWIENIIA (225 aa)) enclose the Peptidase S1 domain. Intrachain disulfides connect cysteine 31–cysteine 163, cysteine 50–cysteine 66, cysteine 98–cysteine 256, cysteine 142–cysteine 210, cysteine 174–cysteine 189, and cysteine 200–cysteine 225. N-linked (GlcNAc...) asparagine glycosylation occurs at asparagine 44. Histidine 65 acts as the Charge relay system in catalysis. 2 N-linked (GlcNAc...) asparagine glycosylation sites follow: asparagine 79 and asparagine 103. Aspartate 110 (charge relay system) is an active-site residue. Asparagine 121 is a glycosylation site (N-linked (GlcNAc...) asparagine). Catalysis depends on serine 204, which acts as the Charge relay system.

The protein belongs to the peptidase S1 family. Snake venom subfamily. Monomer. Post-translationally, N-glycosylated. In terms of tissue distribution, expressed by the venom gland.

It is found in the secreted. In terms of biological role, thrombin-like snake venom serine protease that cleaves fibrinogen beta (FGB) releasing fibrinopeptide B. Promotes capillary permeability-increasing activity through the release of peptides from the beta-chain of fibrinogen. The protein is Thrombin-like enzyme CPI-enzyme 2 of Gloydius ussuriensis (Ussuri mamushi).